A 418-amino-acid polypeptide reads, in one-letter code: tRNA wybutosine-synthesizing protein 2 (418 aa).

Residues Ser-228, Lys-235, 275 to 276, and 302 to 303 contribute to the S-adenosyl-L-methionine site; these read EI and EN.

This sequence belongs to the class I-like SAM-binding methyltransferase superfamily. TRM5/TYW2 family.

It is found in the cytoplasm. It localises to the nucleus. It catalyses the reaction 4-demethylwyosine(37) in tRNA(Phe) + S-adenosyl-L-methionine = 4-demethyl-7-[(3S)-3-amino-3-carboxypropyl]wyosine(37) in tRNA(Phe) + S-methyl-5'-thioadenosine + H(+). The protein operates within tRNA modification; wybutosine-tRNA(Phe) biosynthesis. S-adenosyl-L-methionine-dependent transferase that acts as a component of the wybutosine biosynthesis pathway. Wybutosine is a hyper modified guanosine with a tricyclic base found at the 3'-position adjacent to the anticodon of eukaryotic phenylalanine tRNA. Catalyzes the transfer of the alpha-amino-alpha-carboxypropyl (acp) group from S-adenosyl-L-methionine to the C-7 position of 4-demethylwyosine (imG-14) to produce wybutosine-86. This chain is tRNA wybutosine-synthesizing protein 2 (trm12), found in Schizosaccharomyces pombe (strain 972 / ATCC 24843) (Fission yeast).